Reading from the N-terminus, the 236-residue chain is Sugar fermentation stimulation protein homolog (236 aa).

Belongs to the SfsA family.

In Proteus mirabilis (strain HI4320), this protein is Sugar fermentation stimulation protein homolog.